Consider the following 883-residue polypeptide: MNEQYSALRSNVSMLGKVLGETIKDALGEHILDRVETIRKLSKSSRAGNEANRQELLTTLQNLSNDELLPVARAFSQFLNLANTAEQYHSISPKGEAASNPEVIARTLRKLKNQPDLNDATIKKAVESLSLELVLTAHPTEITRRTLIHKMGEINNCLKQLDNTDIADYERHQVMRRLRQLIAQSWHTDEIRKQRPSPVDEAKWGFAVVENSLWQGVPNYLRELNEQLEENLGYKLPVDFVPVRFTSWMGGDRDGNPNVTADITRHVLLLSRWKATDLFLKDIHVLVSELSMVEATPELLALVGEEGASEPYRYLMKKLRARLMATQSWLEARLKGEKLPKPDGLLTQNEQLWEPLYACYQSLQACGMGIIANGELLDTLRRVKCFGVPLVRIDIRQESTRHTEALGEITRYLGIGDYESWSEADKQAFLIRELNSKRPLLPRNWEPSNDTREVLETCKVIAEAPKGSIAAYVISMAKTPSDVLAVHLLLKEAGIGFAMPVAPLFETLDDLNNADDVMTQLLNIDWYRGLIQGKQMVMIGYSDSAKDAGVMAASWAQYQAQDALIKTCEKAGIELTLFHGRGGSIGRGGAPAHAALLSQPPGSLKGGLRVTEQGEMIRFKYGLPEVTVSSLSLYTSAILEANLLPPPEPKDSWRHIMDELSVISCETYRGYVRENKDFVPYFRSATPEQELGKLPLGSRPAKRRPTGGVESLRAIPWIFAWTQNRLMLPAWLGAGTALQKVVEDGKQSELEAMCRDWPFFSTRLGMLEMVFSKADLWLADYYDQRLVAKTLWPLGKELRDLLEEDIKVVLAIANDSHLMADLPWIAESIQLRNVYTDPLNVLQAELLYRSRLTEEQGKSPDPRVEQALMVTIAGVAAGMRNTG.

Residues H138 and K546 contribute to the active site.

This sequence belongs to the PEPCase type 1 family. Requires Mg(2+) as cofactor.

The enzyme catalyses oxaloacetate + phosphate = phosphoenolpyruvate + hydrogencarbonate. Its function is as follows. Forms oxaloacetate, a four-carbon dicarboxylic acid source for the tricarboxylic acid cycle. This chain is Phosphoenolpyruvate carboxylase, found in Salmonella arizonae (strain ATCC BAA-731 / CDC346-86 / RSK2980).